Here is a 92-residue protein sequence, read N- to C-terminus: Small ribosomal subunit protein uS19 (92 aa).

This sequence belongs to the universal ribosomal protein uS19 family.

Functionally, protein S19 forms a complex with S13 that binds strongly to the 16S ribosomal RNA. The sequence is that of Small ribosomal subunit protein uS19 from Bartonella quintana (strain Toulouse) (Rochalimaea quintana).